A 1657-amino-acid polypeptide reads, in one-letter code: A disintegrin and metalloproteinase with thrombospondin motifs 7 (1657 aa).

The signal sequence occupies residues 1-20 (MHRGPSLLLILCALASRVLG). A propeptide spanning residues 21–220 (PASGLVTEGR…QQQQKRRQQR (200 aa)) is cleaved from the precursor. A glycan (N-linked (GlcNAc...) asparagine) is linked at Asn-84. Residues 165–221 (PGHAQPHVVYKHQGSRKQAQQGDSRPSGTCGMQVPPDLEQQREHWEQQQQKRRQQRS) are disordered. Over residues 180-191 (RKQAQQGDSRPS) the composition is skewed to polar residues. Positions 192-199 (GTCGMQVP) match the Cysteine switch motif. Cys-194 is a binding site for Zn(2+). The region spanning 226–437 (KWVETLVVAD…GWGLCLDDRP (212 aa)) is the Peptidase M12B domain. 11 disulfide bridges follow: Cys-302/Cys-356, Cys-331/Cys-338, Cys-350/Cys-432, Cys-389/Cys-416, Cys-459/Cys-482, Cys-470/Cys-488, Cys-477/Cys-507, Cys-501/Cys-512, Cys-535/Cys-572, Cys-539/Cys-577, and Cys-550/Cys-562. His-372 is a Zn(2+) binding site. Glu-373 is a catalytic residue. His-376 and His-382 together coordinate Zn(2+). The Disintegrin domain occupies 447-522 (VLPGVLYDVN…VPEGFQPEAV (76 aa)). A TSP type-1 1 domain is found at 523-578 (DGGWSGWSAWSDCSRSCGVGVRSSERQCTQPVPKNRGKYCVGERKRSQLCNLPACP). Residue Asn-622 is glycosylated (N-linked (GlcNAc...) asparagine). A spacer region spans residues 683–794 (QTVSRTFKET…PGVHYQYTIQ (112 aa)). TSP type-1 domains are found at residues 804–863 (PEFS…EPCP), 864–923 (PRWW…NRHV), and 925–978 (CPST…QPCQ). 5 disordered regions span residues 1009-1034 (LAPR…EELD), 1073-1127 (GGWT…GLEQ), 1140-1237 (EDTP…DVVE), 1283-1304 (GRDS…SSQH), and 1317-1384 (TVPT…ARNA). Residues 1211–1224 (PQSPIPTQPSPPSI) are compositionally biased toward pro residues. Polar residues-rich tracts occupy residues 1293 to 1304 (PTFSSPELSSQH) and 1327 to 1342 (PSGQ…TQSP). TSP type-1 domains lie at 1366–1414 (QPSL…SGND), 1417–1477 (CTLA…CQPG), 1479–1522 (TKPP…PEPG), and 1524–1584 (CEES…LCSH). The region spanning 1587-1627 (WPESSRPCATEDCELVEPPRCERDRLSFNFCETLRLLGRCQ) is the PLAC domain.

In terms of assembly, interacts with COMP. The cofactor is Zn(2+). Post-translationally, N-glycosylated. Can be O-fucosylated by POFUT2 on a serine or a threonine residue found within the consensus sequence C1-X(2)-(S/T)-C2-G of the TSP type-1 repeat domains where C1 and C2 are the first and second cysteine residue of the repeat, respectively. Fucosylated repeats can then be further glycosylated by the addition of a beta-1,3-glucose residue by the glucosyltransferase, B3GALTL. Fucosylation mediates the efficient secretion of ADAMTS family members. Can also be C-glycosylated with one or two mannose molecules on tryptophan residues within the consensus sequence W-X-X-W of the TPRs. N- and C-glycosylations can also facilitate secretion. In terms of processing, O-glycosylated proteoglycan; contains chondroitin sulfate. May be cleaved by a furin endopeptidase. The precursor is sequentially processed.

It localises to the secreted. It is found in the extracellular space. The protein resides in the extracellular matrix. Its function is as follows. Metalloprotease. Was previously shown to degrade COMP. However, a later study found no activity against COMP. The sequence is that of A disintegrin and metalloproteinase with thrombospondin motifs 7 (Adamts7) from Mus musculus (Mouse).